The chain runs to 189 residues: MTVGILALQGDFREHEEMLRRIGAPTLQVRLPKHLQHVERLIIPGGESTTIGKLLAMYGLIDPLRARIRDGMPVWGTCAGAILLAQRIADGRADQPSLRLMDVTARRNAFGSQLESFEVDLPVLGLGDEPLRMVFIRAPVLEDLGRDVTPLAHLDDGRVVAARQGTMLATCFHPELTPDERMHRYFLAM.

46–48 (GES) provides a ligand contact to L-glutamine. Cysteine 78 (nucleophile) is an active-site residue. Residues arginine 107 and 136 to 137 (IR) each bind L-glutamine. Residues histidine 173 and glutamate 175 each act as charge relay system in the active site.

It belongs to the glutaminase PdxT/SNO family. In terms of assembly, in the presence of PdxS, forms a dodecamer of heterodimers. Only shows activity in the heterodimer.

The enzyme catalyses aldehydo-D-ribose 5-phosphate + D-glyceraldehyde 3-phosphate + L-glutamine = pyridoxal 5'-phosphate + L-glutamate + phosphate + 3 H2O + H(+). It catalyses the reaction L-glutamine + H2O = L-glutamate + NH4(+). It participates in cofactor biosynthesis; pyridoxal 5'-phosphate biosynthesis. Functionally, catalyzes the hydrolysis of glutamine to glutamate and ammonia as part of the biosynthesis of pyridoxal 5'-phosphate. The resulting ammonia molecule is channeled to the active site of PdxS. The sequence is that of Pyridoxal 5'-phosphate synthase subunit PdxT from Roseiflexus sp. (strain RS-1).